The chain runs to 124 residues: Small polypeptide ROTUNDIFOLIA LIKE 3 (124 aa).

Residues 1 to 23 (MEDERWKLSSSKGRSKSGRSCSS) are disordered. N-linked (GlcNAc...) asparagine glycosylation is found at asparagine 35 and asparagine 38. Residues 59 to 75 (AWSAAGAGGGGASSSSS) form a helical membrane-spanning segment. The tract at residues 60–95 (WSAAGAGGGGASSSSSSQHQHQQQQQQSNNSQRLSK) is disordered. A compositionally biased stretch (low complexity) spans 71-91 (SSSSSSQHQHQQQQQQSNNSQ). Asparagine 88 is a glycosylation site (N-linked (GlcNAc...) asparagine). Positions 92–124 (RLSKKCVEAVKEHRARFYIVRRCVSMLVCWRDY) are required for DVL/RTFL small polypeptide activity.

The protein belongs to the DVL/RTFL small polypeptides family.

It is found in the cell membrane. In terms of biological role, small polypeptide acting as a regulatory molecule which coordinates cellular responses required for differentiation, growth and development, probably by restricting polar cell proliferation in lateral organs (e.g. leaves and petioles). The sequence is that of Small polypeptide ROTUNDIFOLIA LIKE 3 from Oryza sativa subsp. japonica (Rice).